A 451-amino-acid chain; its full sequence is Enolase (451 aa).

Q163 is a (2R)-2-phosphoglycerate binding site. E205 serves as the catalytic Proton donor. Mg(2+)-binding residues include D258, E308, and D335. Positions 360, 389, 390, and 411 each coordinate (2R)-2-phosphoglycerate. K360 (proton acceptor) is an active-site residue.

This sequence belongs to the enolase family. Mg(2+) serves as cofactor.

The protein localises to the cytoplasm. Its subcellular location is the secreted. The protein resides in the cell surface. It carries out the reaction (2R)-2-phosphoglycerate = phosphoenolpyruvate + H2O. Its pathway is carbohydrate degradation; glycolysis; pyruvate from D-glyceraldehyde 3-phosphate: step 4/5. Functionally, catalyzes the reversible conversion of 2-phosphoglycerate (2-PG) into phosphoenolpyruvate (PEP). It is essential for the degradation of carbohydrates via glycolysis. The chain is Enolase from Mycoplasma capricolum subsp. capricolum (strain California kid / ATCC 27343 / NCTC 10154).